Here is a 32-residue protein sequence, read N- to C-terminus: Chaperone protein DnaK (32 aa).

It belongs to the heat shock protein 70 family.

Acts as a chaperone. The protein is Chaperone protein DnaK of Anabaena sp. (strain L31).